The primary structure comprises 160 residues: Small ribosomal subunit protein uS19 (160 aa).

The disordered stretch occupies residues 1 to 27 (MARQKFSGKGGKGKSKKGQQSTAPRRR).

Belongs to the universal ribosomal protein uS19 family.

Its function is as follows. Protein S19 forms a complex with S13 that binds strongly to the 16S ribosomal RNA. The sequence is that of Small ribosomal subunit protein uS19 from Methanococcus vannielii (strain ATCC 35089 / DSM 1224 / JCM 13029 / OCM 148 / SB).